Here is a 347-residue protein sequence, read N- to C-terminus: Globoside alpha-1,3-N-acetylgalactosaminyltransferase 1 (347 aa).

Residues 1–5 (MRCRR) are Cytoplasmic-facing. Residues 6-26 (LALGLGFSLLSGIALWSLWIY) traverse the membrane as a helical; Signal-anchor for type II membrane protein segment. The Lumenal segment spans residues 27–347 (METWLPFSYV…LDKATSWLRS (321 aa)). The N-linked (GlcNAc...) asparagine glycan is linked to N108. Residues 116-121 (FAVGKY), 206-208 (DVD), and 228-231 (HPGY) contribute to the substrate site. Positions 206 and 208 each coordinate Mn(2+). The Nucleophile role is filled by E298.

Belongs to the glycosyltransferase 6 family. Mn(2+) serves as cofactor.

The protein localises to the golgi apparatus membrane. It catalyses the reaction a globoside Gb4Cer (d18:1(4E)) + UDP-N-acetyl-alpha-D-galactosamine = a globoside Forssman (d18:1(4E)) + UDP + H(+). The enzyme catalyses a globoside Gb4Cer + UDP-N-acetyl-alpha-D-galactosamine = a globoside IV3GalNAc-Gb4Cer + UDP + H(+). It functions in the pathway protein modification; protein glycosylation. In terms of biological role, catalyzes the formation of Forssman glycolipid via the addition of N-acetylgalactosamine (GalNAc) in alpha-1,3-linkage to GalNAcb-1,3Gala-1,4Galb-1,4GlcCer (Gb4Cer). Forssman glycolipid (also called Forssman antigen; FG) probably serves for adherence of some pathogens such as E.coli uropathogenic strains. This Canis lupus familiaris (Dog) protein is Globoside alpha-1,3-N-acetylgalactosaminyltransferase 1.